The primary structure comprises 504 residues: MEEYQVYLELDISRQQHLLYPLIFREYIYGLVYGHDFNGSIFLENLDYDNKSSLLIVKRLITRMDQQNHLIISANDSKKNQFLSYNKNLYSQIISEGFAIVVEIPLSLQLNSSSEESKIIKYYKNLRSIHSIFPFFEDKLTYLNYVSDARIPYPIHLXXXXXXXXXXXXXXPLFHLLRLFFYEYCNWNNLITPKKSISTFSKSNLRVFLFLYNFYVCQYESIFLFLRNKSSHLRLTSFIVLFERIYFYGKIEHFLEVFAKDFSSTFFKELFIHYVRYQEKYILASKNASLLMNKWKNYLIRLWQYHFDVWSQPRTIQINQFSEGSFRLLGYFSNVRLNRSAVRSQMLENSFLIEIVMKKLETIVPIIPLIRSLAKAKFCNVLGHPISKPVWADSSDFYIIDRFLQICRNLSHYYNGSSKKKSLYRVKYILRLSCIKTLARKHKSTVRAFLKRLGSEKLLEEFFTEEEEILSLVFQRVSSTLQGLYRGRVWYLDIIFSNDLVNHE.

This sequence belongs to the intron maturase 2 family. MatK subfamily.

The protein resides in the plastid. Its subcellular location is the chloroplast. In terms of biological role, usually encoded in the trnK tRNA gene intron. Probably assists in splicing its own and other chloroplast group II introns. In Lupinus argenteus (Silvery lupine), this protein is Maturase K.